Reading from the N-terminus, the 89-residue chain is Small ribosomal subunit protein uS15 (89 aa).

A compositionally biased stretch (basic and acidic residues) spans 1–11; it reads MSITAERKAEV. The segment at 1 to 25 is disordered; that stretch reads MSITAERKAEVIKTNARKSGDTGSP.

It belongs to the universal ribosomal protein uS15 family. As to quaternary structure, part of the 30S ribosomal subunit. Forms a bridge to the 50S subunit in the 70S ribosome, contacting the 23S rRNA.

Its function is as follows. One of the primary rRNA binding proteins, it binds directly to 16S rRNA where it helps nucleate assembly of the platform of the 30S subunit by binding and bridging several RNA helices of the 16S rRNA. In terms of biological role, forms an intersubunit bridge (bridge B4) with the 23S rRNA of the 50S subunit in the ribosome. This chain is Small ribosomal subunit protein uS15, found in Nitrobacter hamburgensis (strain DSM 10229 / NCIMB 13809 / X14).